The chain runs to 968 residues: Polycystin-2 (968 aa).

The span at 1 to 11 (MVNSSRVQPQQ) shows a compositional bias: polar residues. Disordered stretches follow at residues 1–28 (MVNS…DPGR) and 58–181 (RIRQ…LPLE). Topologically, residues 1–219 (MVNSSRVQPQ…STNREKYLKS (219 aa)) are cytoplasmic. The span at 62-83 (AAARDPPAGAAASPSPPLSSCS) shows a compositional bias: low complexity. A phosphoserine mark is found at serine 76 and serine 80. Positions 95-107 (EAEEEEEEVEGEE) are enriched in acidic residues. A compositionally biased stretch (low complexity) spans 123-139 (RRSAASSAVSSVGARSR). Arginine 137 is subject to Omega-N-methylarginine. The chain crosses the membrane as a helical span at residues 220-241 (VLRELVTYLLFLIVLCILTYGM). Over 242-468 (MSSNVYYYTR…PLKLIRYVTT (227 aa)) the chain is Extracellular. 2 N-linked (GlcNAc...) asparagine glycosylation sites follow: asparagine 299 and asparagine 305. The N-linked (GlcNAc...) (complex) asparagine glycan is linked to asparagine 328. Cysteine 331 and cysteine 344 are joined by a disulfide. Residues asparagine 362 and asparagine 375 are each glycosylated (N-linked (GlcNAc...) asparagine). Residues 469-489 (FDFFLAACEIIFCFFIFYYVV) traverse the membrane as a helical segment. Over 490 to 505 (EEILEIRIHKLHYFRS) the chain is Cytoplasmic. Residues 506-526 (FWNCLDVVIVVLSVVAIGINI) traverse the membrane as a helical segment. Over 527 to 552 (YRTSNVEVLLQFLEDQNTFPNFEHLA) the chain is Extracellular. Residues 553–573 (YWQIQFNNIAAVTVFFVWIKL) form a helical membrane-spanning segment. Residue glutamine 557 coordinates cholesterol. Residues 574–597 (FKFINFNRTMSQLSTTMSRCAKDL) lie on the Cytoplasmic side of the membrane. The chain crosses the membrane as a helical span at residues 598–619 (FGFAIMFFIIFLAYAQLAYLVF). The Extracellular portion of the chain corresponds to 620-631 (GTQVDDFSTFQE). The pore-forming intramembrane region spans 632 to 646 (CIFTQFRIILGDINF). Leucine 641 serves as a coordination point for Ca(2+). The short motif at 641 to 643 (LGD) is the Selectivity filter element. Over 647-654 (AEIEEANR) the chain is Extracellular. Residues 655–675 (VLGPIYFTTFVFFMFFILLNM) traverse the membrane as a helical segment. The Cytoplasmic portion of the chain corresponds to 676–968 (FLAIINDTYS…GGNGSSNVHV (293 aa)). The EF-hand domain maps to 750-785 (HTDAEIEAIFTKYDQDGDQELTEHEHQQMRDDLEKE). Residues aspartate 763, aspartate 765, aspartate 767, glutamate 769, and glutamate 774 each coordinate Ca(2+). The interval 764 to 831 (QDGDQELTEH…HSSRRRGSIS (68 aa)) is disordered. Residues 770-795 (LTEHEHQQMRDDLEKEREDLDLDHSS) are compositionally biased toward basic and acidic residues. The segment covering 796–807 (LPRPMSSRSFPR) has biased composition (low complexity). Residues serine 801, serine 808, serine 812, and serine 829 each carry the phosphoserine modification. The interval 803 to 822 (RSFPRSLDDSEEDDDEDSGH) is linker. The important for interaction with PACS1 and PACS2 stretch occupies residues 810-821 (DDSEEDDDEDSG). A coiled-coil region spans residues 833-872 (GVSYEEFQVLVRRVDRMEHSIGSIVSKIDAVIVKLEIMER). The interval 917 to 968 (ESDDAASQISHGLGTPVGLNGQPRPRSSRPSSSQSTEGMEGAGGNGSSNVHV) is disordered. Low complexity predominate over residues 938–951 (QPRPRSSRPSSSQS).

This sequence belongs to the polycystin family. Homotetramer. Component of the heterotetrameric polycystin channel complex with PKD1; the tetramer contains one PKD1 chain and three PKD2 chains. Isoform 1 interacts with PKD1 while isoform 3 does not. Interacts with PKD1L1; probably forms a Ca(2+) channel. Interacts with CD2AP. Interacts with HAX1. Interacts with NEK8. Part of a complex containing AKAP5, ADCY5, ADCY6 and PDE4C. Interacts (via C-terminus) with TRPV4 (via C-terminus). Interacts (via C-terminal acidic region) with PACS1 and PACS2; these interactions retain the protein in the endoplasmic reticulum and prevent trafficking to the cell membrane. Interacts with TMEM33. Form a heterotetramer with TRPC1 with a 2:2 stoichiometry; has distinct channel properties separate from PKD2 or TRPC1 homomers alone. Interacts with TMEM120A; TMEM120A inhibits PKD2 channel activity through the physical association of PKD2 with TMEM120A. Interacts (via N-terminus) with RYR2; regulates RYR2 channel activity. Phosphorylated. Phosphorylation is important for protein function; a mutant that lacks the N-terminal phosphorylation sites cannot complement a zebrafish pkd2-deficient mutant. PKD-mediated phosphorylation at the C-terminus regulates its function in the release of Ca(2+) stores from the endoplasmic reticulum. Phosphorylation at Ser-812 regulates PKD2 trafficking. Phosphorylation at Ser-76 is required for PKD2 trafficking to or retention at the lateral plasma membrane. Phosphorylation at Ser-801, Ser-812 and Ser-829 regulates PKD2 channel activity. In terms of processing, N-glycosylated. The four subunits in a tetramer probably differ in the extent of glycosylation; simultaneous glycosylation of all experimentally validated sites would probably create steric hindrance. Thus, glycosylation at Asn-305 is not compatible with glycosylation at Asn-328; only one of these two residues is glycosylated at a given time. Post-translationally, sumoylated by SUMO1; sumoylation regulates PKD2 membrane recycling and is necessary for intravascular pressure-induced arterial contractility. In terms of tissue distribution, detected in fetal and adult kidney. Detected at the thick ascending limb of the loop of Henle, at distal tubules, including the distal convoluted tubule and cortical collecting tubules, with weak staining of the collecting duct. Detected on placenta syncytiotrophoblasts (at protein level). Strongly expressed in ovary, fetal and adult kidney, testis, and small intestine. Not detected in peripheral leukocytes.

Its subcellular location is the cell projection. It localises to the cilium membrane. The protein resides in the endoplasmic reticulum membrane. The protein localises to the cell membrane. It is found in the basolateral cell membrane. Its subcellular location is the cytoplasmic vesicle membrane. It localises to the golgi apparatus. The protein resides in the vesicle. The protein localises to the secreted. It is found in the extracellular exosome. The catalysed reaction is K(+)(in) = K(+)(out). It carries out the reaction Na(+)(in) = Na(+)(out). The enzyme catalyses Ca(2+)(in) = Ca(2+)(out). With respect to regulation, channel activity is regulated by phosphorylation. Channel activity is regulated by intracellular Ca(2+). At the endoplasmic reticulum membrane (ER), TMEM33 enhances its channel activity. TMEM120A inhibits the channel activity of PKD2, and mediates mechanosensitivity of the PKD2-TMEM120A channel complex. PKD1/PKD2 complex on the plasma membrane is activated by PKD1 N-terminus. Its function is as follows. Forms a nonselective cation channel. Can function as a homotetrameric ion channel or can form heteromer with PKD1. Displays distinct function depending on its subcellular localization and regulation by its binding partners. In primary cilium functions as a cation channel, with a preference for monovalent cations over divalent cations that allows K(+), Na(+) and Ca(2+) influx, with low selectivity for Ca(2+). Involved in fluid-flow mechanosensation by the primary cilium in renal epithelium. In the endoplasmic reticulum, likely functions as a K(+) channel to facilitate Ca(2+) release. The heterotetrameric PKD1/PKD2 channel has higher Ca(2+) permeability than homomeric PKD2 channel and acts as a primarily Ca(2+)-permeable channel. Interacts with and acts as a regulator of a number of other channels, such as TRPV4, TRPC1, IP3R, RYR2, ultimately further affecting intracellular signaling, to modulate intracellular Ca(2+) signaling. Together with TRPV4, forms mechano- and thermosensitive channels in cilium. In cardiomyocytes, PKD2 modulates Ca(2+) release from stimulated RYR2 receptors through direct association. Also involved in left-right axis specification via its role in sensing nodal flow; forms a complex with PKD1L1 in cilia to facilitate flow detection in left-right patterning. Acts as a regulator of cilium length together with PKD1. Mediates systemic blood pressure and contributes to the myogenic response in cerebral arteries though vasoconstriction. This chain is Polycystin-2, found in Homo sapiens (Human).